Here is a 501-residue protein sequence, read N- to C-terminus: MKRLLPFLTDLEAWVEQLIPLKQMTLDSRQVTEGDLFIALKGHQCDGRQFIQNAIEQGAAIILAEAESDQDEIELDSQFARYNLDRRACKVITVPRLAERLSAIADSFYASPSAKLKLIGITGTNGKTTTAQLLAQWHNLLGGHSAVMGTIGNGLYGQEQEAINTTGSAIEVQQNLARFVEQGADFCAMEVSSHGLAQYRVEALQYDLAIFTNLSRDHLDYHHSIAAYEAAKFRLFNALQTKAQVLNADDQVAQNWLSMLPNAVLVSCDPNFTSEHQFVKATKVNFSLQGAYIEFESSWGNGQFHSQLSGAFNVTNILLALAGLLTLGYDLAKLVATASQLRSVTGRMQKVSAITDKNRPLVLVDYAHTPDALQKALQAARLHTKGKLFCVFGCGGDRDCGKRPLMATIAEELADGVIVTNDNPRTEDQHKIVAEIMQGFAKPDNILVIYDREQAIQHAIKHASSADLILIAGKGHENYQIIGTIKHHFSDQEIASKYLSQ.

Residues leucine 26, serine 28, and 43–45 contribute to the UDP-N-acetyl-alpha-D-muramoyl-L-alanyl-D-glutamate site; that span reads HQC. 123-129 is an ATP binding site; sequence GTNGKTT. UDP-N-acetyl-alpha-D-muramoyl-L-alanyl-D-glutamate-binding positions include asparagine 164, 165–166, serine 192, glutamine 198, and arginine 200; that span reads TT. Lysine 232 carries the N6-carboxylysine modification. Meso-2,6-diaminopimelate contacts are provided by residues arginine 398, 422–425, glycine 473, and glutamate 477; that span reads DNPR. Positions 422-425 match the Meso-diaminopimelate recognition motif motif; the sequence is DNPR.

It belongs to the MurCDEF family. MurE subfamily. The cofactor is Mg(2+). In terms of processing, carboxylation is probably crucial for Mg(2+) binding and, consequently, for the gamma-phosphate positioning of ATP.

The protein localises to the cytoplasm. It catalyses the reaction UDP-N-acetyl-alpha-D-muramoyl-L-alanyl-D-glutamate + meso-2,6-diaminopimelate + ATP = UDP-N-acetyl-alpha-D-muramoyl-L-alanyl-gamma-D-glutamyl-meso-2,6-diaminopimelate + ADP + phosphate + H(+). It functions in the pathway cell wall biogenesis; peptidoglycan biosynthesis. In terms of biological role, catalyzes the addition of meso-diaminopimelic acid to the nucleotide precursor UDP-N-acetylmuramoyl-L-alanyl-D-glutamate (UMAG) in the biosynthesis of bacterial cell-wall peptidoglycan. The chain is UDP-N-acetylmuramoyl-L-alanyl-D-glutamate--2,6-diaminopimelate ligase from Haemophilus ducreyi (strain 35000HP / ATCC 700724).